Reading from the N-terminus, the 867-residue chain is Xylosyltransferase 2 (867 aa).

Residues 1–15 (MVASARVQKLVRRYK) lie on the Cytoplasmic side of the membrane. Residues 16–36 (LAIATALAILLLQGLVVWSFS) form a helical; Signal-anchor for type II membrane protein membrane-spanning segment. Over 37–867 (VLEDDEPGEK…GPVKADGRLR (831 aa)) the chain is Lumenal. Residues 41 to 122 (DEPGEKGRQK…PPPEAPGRQN (82 aa)) are disordered. Residues 53 to 65 (RPLDPSEGSKDTD) show a composition bias toward basic and acidic residues. Residues 73–82 (SAGRRHGRWR) are compositionally biased toward basic residues. N122 is a glycosylation site (N-linked (GlcNAc...) asparagine). 2 cysteine pairs are disulfide-bonded: C161–C189 and C205–C447. Residues V238, D266, and 295 to 297 (TIW) contribute to the UDP-alpha-D-xylose site. N-linked (GlcNAc...) asparagine glycosylation occurs at N326. UDP-alpha-D-xylose-binding positions include 399-400 (DW), S480, and 503-504 (RK). 2 cysteine pairs are disulfide-bonded: C580/C835 and C828/C841. The N-linked (GlcNAc...) asparagine glycan is linked to N685.

It belongs to the glycosyltransferase 14 family. XylT subfamily. Monomer. Mg(2+) serves as cofactor. The cofactor is Mn(2+). In terms of processing, contains disulfide bonds.

It is found in the golgi apparatus membrane. The protein resides in the secreted. The enzyme catalyses UDP-alpha-D-xylose + L-seryl-[protein] = 3-O-(beta-D-xylosyl)-L-seryl-[protein] + UDP + H(+). It functions in the pathway glycan metabolism; chondroitin sulfate biosynthesis. The protein operates within glycan metabolism; heparan sulfate biosynthesis. In terms of biological role, catalyzes the first step in the biosynthesis of chondroitin sulfate, heparan sulfate and dermatan sulfate proteoglycans, such as DCN. Transfers D-xylose from UDP-D-xylose to specific serine residues of the core protein. In Bos taurus (Bovine), this protein is Xylosyltransferase 2 (XYLT2).